The following is a 608-amino-acid chain: Isocitrate dehydrogenase kinase/phosphatase (608 aa).

ATP contacts are provided by residues 327-333 and Lys348; that span reads APGIKGL. Residue Asp383 is part of the active site. Residues 589–608 form a disordered region; it reads FDSTPDAGDGDSAGDAQRAA.

This sequence belongs to the AceK family.

Its subcellular location is the cytoplasm. The enzyme catalyses L-seryl-[isocitrate dehydrogenase] + ATP = O-phospho-L-seryl-[isocitrate dehydrogenase] + ADP + H(+). Its function is as follows. Bifunctional enzyme which can phosphorylate or dephosphorylate isocitrate dehydrogenase (IDH) on a specific serine residue. This is a regulatory mechanism which enables bacteria to bypass the Krebs cycle via the glyoxylate shunt in response to the source of carbon. When bacteria are grown on glucose, IDH is fully active and unphosphorylated, but when grown on acetate or ethanol, the activity of IDH declines drastically concomitant with its phosphorylation. The protein is Isocitrate dehydrogenase kinase/phosphatase of Burkholderia ambifaria (strain MC40-6).